The primary structure comprises 343 residues: Olfactory receptor 6K6 (343 aa).

Topologically, residues 1–53 (MKQYSVGNQHSNYRSLLFPFLCSQMTQLTASGNQTMVTEFLFSMFPHAHRGGL) are extracellular. A glycan (N-linked (GlcNAc...) asparagine) is linked at asparagine 33. Residues 54–74 (LFFIPLLLIYGFILTGNLIMF) traverse the membrane as a helical segment. Residues 75–82 (IVIQVGMA) lie on the Cytoplasmic side of the membrane. A helical transmembrane segment spans residues 83–103 (LHTPLYFFISVLSFLEICYTT). Residues 104–127 (TTIPKMLSCLISEQKSISVAGCLL) are Extracellular-facing. Cysteine 125 and cysteine 217 are disulfide-bonded. Residues 128–148 (QMYFFHSLGITESCVLTAMAI) traverse the membrane as a helical segment. Residues 149–167 (DRYIAICNPLRYPTIMIPK) lie on the Cytoplasmic side of the membrane. Residues 168–188 (LCIQLTVGSCFCGFLLVLPEI) form a helical membrane-spanning segment. Over 189-224 (AWISTLPFCGSNQIHQIFCDFTPVLSLACTDTFLVV) the chain is Extracellular. A helical transmembrane segment spans residues 225-244 (IVDAIHAAEIVASFLVIALS). The Cytoplasmic segment spans residues 245–264 (YIRIIIVILGMHSAEGHHKA). The chain crosses the membrane as a helical span at residues 265–285 (FSTCAAHLAVFLLFFGSVAVM). Over 286–298 (YLRFSATYSVFWD) the chain is Extracellular. The chain crosses the membrane as a helical span at residues 299–319 (TAIAVTFVILAPFFNPIIYSL). The Cytoplasmic segment spans residues 320–343 (KNKDMKEAIGRLFHYQKRAGWAGK).

Belongs to the G-protein coupled receptor 1 family.

It localises to the cell membrane. Functionally, odorant receptor. The protein is Olfactory receptor 6K6 (OR6K6) of Homo sapiens (Human).